The primary structure comprises 161 residues: Protein-export protein SecB (161 aa).

The protein belongs to the SecB family. In terms of assembly, homotetramer, a dimer of dimers. One homotetramer interacts with 1 SecA dimer.

Its subcellular location is the cytoplasm. Functionally, one of the proteins required for the normal export of preproteins out of the cell cytoplasm. It is a molecular chaperone that binds to a subset of precursor proteins, maintaining them in a translocation-competent state. It also specifically binds to its receptor SecA. The protein is Protein-export protein SecB of Methylocella silvestris (strain DSM 15510 / CIP 108128 / LMG 27833 / NCIMB 13906 / BL2).